The sequence spans 275 residues: 3-methyl-2-oxobutanoate hydroxymethyltransferase (275 aa).

Mg(2+) contacts are provided by aspartate 44 and aspartate 83. 3-methyl-2-oxobutanoate contacts are provided by residues 44 to 45 (DS), aspartate 83, and lysine 113. Glutamate 115 lines the Mg(2+) pocket. Residue glutamate 182 is the Proton acceptor of the active site.

It belongs to the PanB family. As to quaternary structure, homodecamer; pentamer of dimers. It depends on Mg(2+) as a cofactor.

The protein localises to the cytoplasm. The enzyme catalyses 3-methyl-2-oxobutanoate + (6R)-5,10-methylene-5,6,7,8-tetrahydrofolate + H2O = 2-dehydropantoate + (6S)-5,6,7,8-tetrahydrofolate. Its pathway is cofactor biosynthesis; (R)-pantothenate biosynthesis; (R)-pantoate from 3-methyl-2-oxobutanoate: step 1/2. Catalyzes the reversible reaction in which hydroxymethyl group from 5,10-methylenetetrahydrofolate is transferred onto alpha-ketoisovalerate to form ketopantoate. This is 3-methyl-2-oxobutanoate hydroxymethyltransferase from Clostridium beijerinckii (strain ATCC 51743 / NCIMB 8052) (Clostridium acetobutylicum).